The primary structure comprises 328 residues: GMP reductase (328 aa).

Cys176 (thioimidate intermediate) is an active-site residue. 205–228 (IIADGGIRTHGDIAKSIRFGASMI) provides a ligand contact to NADP(+).

It belongs to the IMPDH/GMPR family. GuaC type 2 subfamily.

It catalyses the reaction IMP + NH4(+) + NADP(+) = GMP + NADPH + 2 H(+). Functionally, catalyzes the irreversible NADPH-dependent deamination of GMP to IMP. It functions in the conversion of nucleobase, nucleoside and nucleotide derivatives of G to A nucleotides, and in maintaining the intracellular balance of A and G nucleotides. The protein is GMP reductase of Streptococcus pneumoniae (strain ATCC 700669 / Spain 23F-1).